We begin with the raw amino-acid sequence, 119 residues long: Protein TusC (119 aa).

This sequence belongs to the DsrF/TusC family. As to quaternary structure, heterohexamer, formed by a dimer of trimers. The hexameric TusBCD complex contains 2 copies each of TusB, TusC and TusD. The TusBCD complex interacts with TusE.

It localises to the cytoplasm. Part of a sulfur-relay system required for 2-thiolation of 5-methylaminomethyl-2-thiouridine (mnm(5)s(2)U) at tRNA wobble positions. The polypeptide is Protein TusC (Buchnera aphidicola subsp. Acyrthosiphon pisum (strain APS) (Acyrthosiphon pisum symbiotic bacterium)).